The primary structure comprises 24 residues: Brevinin-1Bb (24 aa).

An intrachain disulfide couples Cys18 to Cys24.

Expressed by the skin glands.

The protein localises to the secreted. Antibacterial activity against Gram-positive bacterium S.aureus and Gram-negative bacterium E.coli. Has activity against C.albicans. In Lithobates berlandieri (Rio Grande leopard frog), this protein is Brevinin-1Bb.